Here is a 173-residue protein sequence, read N- to C-terminus: Shikimate kinase 1 (173 aa).

14–19 (GAGKST) is an ATP binding site. Position 18 (S18) interacts with Mg(2+). Residues D36, R60, and G82 each coordinate substrate. R120 contributes to the ATP binding site. Substrate is bound at residue R140. Residue Q157 coordinates ATP.

Belongs to the shikimate kinase family. Monomer. The cofactor is Mg(2+).

The protein localises to the cytoplasm. It carries out the reaction shikimate + ATP = 3-phosphoshikimate + ADP + H(+). Its pathway is metabolic intermediate biosynthesis; chorismate biosynthesis; chorismate from D-erythrose 4-phosphate and phosphoenolpyruvate: step 5/7. In terms of biological role, catalyzes the specific phosphorylation of the 3-hydroxyl group of shikimic acid using ATP as a cosubstrate. In Serratia proteamaculans (strain 568), this protein is Shikimate kinase 1.